The chain runs to 403 residues: Succinoglycan biosynthesis protein ExoL (403 aa).

It localises to the cytoplasm. Its pathway is glycan metabolism; exopolysaccharide biosynthesis. In terms of biological role, essential for succinoglycan (EPS I) synthesis and nodule infection. Glycosyltransferase needed for the addition of the third sugar (glucose), catalyzes the formation of a beta-1,4 linkage between the second and third sugars. This is Succinoglycan biosynthesis protein ExoL (exoL) from Rhizobium meliloti (strain 1021) (Ensifer meliloti).